Here is a 361-residue protein sequence, read N- to C-terminus: Putative F-box protein At1g33010 (361 aa).

The 47-residue stretch at 4 to 50 folds into the F-box domain; that stretch reads GNTLDSIPTDLILEIFSRLSAKSVGRLRCLSKLWRKGEWFFFSSLQP. Positions 308–339 are disordered; sequence SIRPTEQKHKPTSTETSMSRKDHQVRTIDQPQ.

The polypeptide is Putative F-box protein At1g33010 (Arabidopsis thaliana (Mouse-ear cress)).